The chain runs to 489 residues: Threonine/serine exporter (489 aa).

10 helical membrane-spanning segments follow: residues 151 to 171 (GFPVALLGWAMMGGAVAVLLG), 174 to 194 (WQVSLIAFITAFTIIATTSFL), 206 to 226 (VVGGFIATLPASIAYSLALQF), 233 to 253 (SQIIASGIVVLLAGLTLVQSL), 268 to 288 (FFETLLFTGGIVAGVGLGIQL), 314 to 334 (IIAGGVTAAAFAVGCYAEWSS), 335 to 355 (VIIAGLTALMGSAFYYLFVVY), 356 to 376 (LGPVSAAAIAATAVGFTGGLL), 381 to 401 (LIPPLIVAIAGITPMLPGLAI), and 420 to 440 (IAVALATASSLAAGVVLGEWI). The interval 464–489 (FQEEAEQNQRRQRKRPKTNQRFGNKR) is disordered. Over residues 473–489 (RRQRKRPKTNQRFGNKR) the composition is skewed to basic residues.

The protein belongs to the ThrE exporter (TC 2.A.79) family.

It is found in the cell membrane. It carries out the reaction L-threonine(in) + H(+)(out) = L-threonine(out) + H(+)(in). With respect to regulation, transport is inhibited by the proton ionophore carbonyl cyanide m-chlorophenylhydrazone (CCCP). In terms of biological role, catalyzes the export of L-threonine and L-serine from the cell to the extracellular environment. Export is dependent on the proton motive force. This is Threonine/serine exporter from Corynebacterium glutamicum (Brevibacterium saccharolyticum).